Here is a 198-residue protein sequence, read N- to C-terminus: ATP-dependent Clp protease proteolytic subunit 1 (198 aa).

Residue serine 98 is the Nucleophile of the active site. Histidine 123 is an active-site residue.

It belongs to the peptidase S14 family. As to quaternary structure, fourteen ClpP subunits assemble into 2 heptameric rings which stack back to back to give a disk-like structure with a central cavity, resembling the structure of eukaryotic proteasomes.

It is found in the cytoplasm. It carries out the reaction Hydrolysis of proteins to small peptides in the presence of ATP and magnesium. alpha-casein is the usual test substrate. In the absence of ATP, only oligopeptides shorter than five residues are hydrolyzed (such as succinyl-Leu-Tyr-|-NHMec, and Leu-Tyr-Leu-|-Tyr-Trp, in which cleavage of the -Tyr-|-Leu- and -Tyr-|-Trp bonds also occurs).. Its function is as follows. Cleaves peptides in various proteins in a process that requires ATP hydrolysis. Has a chymotrypsin-like activity. Plays a major role in the degradation of misfolded proteins. ClpXP1 is involved in the complete degradation of the Site-2 clipped anti-sigma-W factor RsiW. This results in the release of SigW and the transcription activation of the genes under the control of the sigma-W factor. The polypeptide is ATP-dependent Clp protease proteolytic subunit 1 (Bacillus licheniformis (strain ATCC 14580 / DSM 13 / JCM 2505 / CCUG 7422 / NBRC 12200 / NCIMB 9375 / NCTC 10341 / NRRL NRS-1264 / Gibson 46)).